Here is an 84-residue protein sequence, read N- to C-terminus: Beta-defensin 119 (84 aa).

The signal sequence occupies residues Met-1–Gly-21. 3 cysteine pairs are disulfide-bonded: Cys-28–Cys-55, Cys-35–Cys-49, and Cys-39–Cys-56.

Belongs to the beta-defensin family. As to expression, abundant expression in the male reproductive tract only. Expressed abundantly in testis, while expression in epididymis decreased gradually from caput to cauda.

The protein localises to the secreted. In terms of biological role, has antibacterial activity. The polypeptide is Beta-defensin 119 (DEFB119) (Macaca mulatta (Rhesus macaque)).